The chain runs to 338 residues: Glyceraldehyde-3-phosphate dehydrogenase (338 aa).

5 residues coordinate NAD(+): Arg-13, Ile-14, Asp-35, Arg-80, and Ser-123. D-glyceraldehyde 3-phosphate contacts are provided by Ser-152, Cys-153, Thr-154, Thr-183, Arg-198, Thr-212, Gly-213, and Arg-235. Cys-153 (nucleophile) is an active-site residue. An NAD(+)-binding site is contributed by Asn-317.

This sequence belongs to the glyceraldehyde-3-phosphate dehydrogenase family. As to quaternary structure, homotetramer.

It is found in the tegument membrane. It carries out the reaction D-glyceraldehyde 3-phosphate + phosphate + NAD(+) = (2R)-3-phospho-glyceroyl phosphate + NADH + H(+). It functions in the pathway carbohydrate degradation; glycolysis; pyruvate from D-glyceraldehyde 3-phosphate: step 1/5. In terms of biological role, this antigen is associated with human resistance to schistosomiasis. This is Glyceraldehyde-3-phosphate dehydrogenase from Schistosoma mansoni (Blood fluke).